The sequence spans 190 residues: Imidazoleglycerol-phosphate dehydratase (190 aa).

It belongs to the imidazoleglycerol-phosphate dehydratase family.

It is found in the cytoplasm. It catalyses the reaction D-erythro-1-(imidazol-4-yl)glycerol 3-phosphate = 3-(imidazol-4-yl)-2-oxopropyl phosphate + H2O. It functions in the pathway amino-acid biosynthesis; L-histidine biosynthesis; L-histidine from 5-phospho-alpha-D-ribose 1-diphosphate: step 6/9. The sequence is that of Imidazoleglycerol-phosphate dehydratase from Aliarcobacter butzleri (strain RM4018) (Arcobacter butzleri).